We begin with the raw amino-acid sequence, 331 residues long: MASHCSMRVILLRFSNGVSSRSILNSTNHRLLSLTMTNTLSSLSSISPHTTTSHFTAASQQSDDQNCFRKLQLRKISISTPLCMGRRSSKIAGRKGAQDSKKAKLYCRIGKEVVSAVKKGGPNPVSNTTLATILDKAKELDVPKDIVERNIKRASEKGQEAFIEKIYEVYGYGGVSMVVEVLTDKINRSVAAIRSVVKDYGGKMADSGSVMFKFKRVRVVNIKVTEADKDQLLIIALDAGAEDVIEPPTYEDDTDEDREERYYKIVTSNENYSTILSKLRDEGVNFEPDNGSELLPLTTVEVDDEAMELNKELMQKLLELDDVDAVYIDQK.

It belongs to the TACO1 family.

This is Probable transcriptional regulatory protein At2g25830 from Arabidopsis thaliana (Mouse-ear cress).